Reading from the N-terminus, the 315-residue chain is Secreted mono- and diacylglycerol lipase LIP2 (315 aa).

A signal peptide spans 1-21 (MACFRVILYLSVIFFVQCVFA). Cysteines 68 and 308 form a disulfide. N-linked (GlcNAc...) asparagine glycosylation occurs at Asn74. Catalysis depends on Ser182, which acts as the Nucleophile. Residue Asp240 is part of the active site. An N-linked (GlcNAc...) asparagine glycan is attached at Asn265. Residue His292 is part of the active site.

This sequence belongs to the AB hydrolase superfamily. Lipase family. Class 3 subfamily.

Its subcellular location is the secreted. The catalysed reaction is a monoacylglycerol + H2O = glycerol + a fatty acid + H(+). The enzyme catalyses a diacylglycerol + H2O = a monoacylglycerol + a fatty acid + H(+). Its function is as follows. Secreted lipase involved in Dandruff and seborrheic dermatitis (D/SD) probably via lipase-mediated breakdown of sebaceous lipids and release of irritating free fatty acids. Shows activity against monoglyceride and diglyceride substrates and generates free oleic acid from the substrates mono- and diolein. Able to cleave the oleic acid from both the 1 and the 2 position of the glycerol backbone as 1,2 isomers of diolein were converted into oleic acid and glycerol. Due to an absence of fatty acid synthase genes in Malassezia species, secretory lipases are essential for the yeast to generate free fatty acids from degradation of sebum and assimilate them as lipid sources for growth. Plays an essential role at the pathogen-host interface during disease progression. Also performs the reverse reaction to build diacylglycerols from monoacylglycerols. This is Secreted mono- and diacylglycerol lipase LIP2 from Malassezia restricta (Seborrheic dermatitis infection agent).